The following is a 396-amino-acid chain: Cathepsin D (396 aa).

Residues 1 to 18 (MKMLLLCVFSALALTNDA) form the signal peptide. A propeptide spans 19 to 61 (LVRIPLKKFRSIRRQLTDSGKRAEELLADHHSLKYNLSFPASN) (activation peptide). One can recognise a Peptidase A1 domain in the interval 76–393 (YYGEIGLGTP…DRDANRVGFA (318 aa)). Aspartate 94 is a catalytic residue. The cysteines at positions 107 and 114 are disulfide-linked. N-linked (GlcNAc...) asparagine glycosylation is found at asparagine 131 and asparagine 249. The cysteines at positions 272 and 276 are disulfide-linked. Aspartate 281 is an active-site residue. Cysteine 315 and cysteine 352 are joined by a disulfide.

Belongs to the peptidase A1 family. As to quaternary structure, monomer.

It localises to the lysosome. It carries out the reaction Specificity similar to, but narrower than, that of pepsin A. Does not cleave the 4-Gln-|-His-5 bond in B chain of insulin.. With respect to regulation, inhibited by pepstatin. Functionally, acid protease active in intracellular protein breakdown. The polypeptide is Cathepsin D (ctsd) (Chionodraco hamatus (Antarctic teleost icefish)).